We begin with the raw amino-acid sequence, 2669 residues long: Nucleosome-remodeling factor subunit NURF301 (2669 aa).

Over residues 1–12 the composition is skewed to basic residues; it reads MSGRGSRKRGRP. Residues 1-121 are required for function in nucleosome sliding; that stretch reads MSGRGSRKRG…EEDKSDNEDD (121 aa). The disordered stretch occupies residues 1–125; that stretch reads MSGRGSRKRG…SDNEDDMLLT (125 aa). Positions 6–18 form a DNA-binding region, a.T hook; sequence SRKRGRPPKTPNE. Polar residues predominate over residues 38–56; sequence GKSQPSTPSASRGISPQSD. Ser40, Ser52, Ser55, Ser59, and Ser62 each carry phosphoserine. A compositionally biased stretch (basic residues) spans 66-82; sequence HTNRSRGSAAKRGRGRK. A compositionally biased stretch (acidic residues) spans 109–125; that stretch reads GDSEEDKSDNEDDMLLT. A DDT domain is found at 188–248; it reads NTHVLRALSI…LKAILREEDA (61 aa). A PHD-type 1 zinc finger spans residues 339-386; sequence DDHCRVCHRLGDLLCCETCPAVYHLECVDPPMNDVPTEDWQCGLCRSH. Residues 460 to 515 are a coiled coil; that stretch reads RLHSQITERRDEIERQMKLTETLTNEHKHTKRSVIEIEQEAKNELLEKEVLDEDEK. The tract at residues 505–538 is disordered; it reads LEKEVLDEDEKDGDAKSESQSIEGTKKQEECKMV. The segment covering 528–537 has biased composition (basic and acidic residues); it reads GTKKQEECKM. Positions 688–720 form a coiled coil; that stretch reads LQRITSAEREERKKLEKREKRERDDEEERNRLA. Disordered regions lie at residues 1026–1048, 1135–1159, and 1406–1425; these read EGKRESTQVAVDDSEEGKPAESE, TGLNSGNAEDVDMTPGWRRKRNQKS, and RSGLRKRKRAESPQPTEPQI. At Ser1417 the chain carries Phosphoserine. The residue at position 1527 (Thr1527) is a Phosphothreonine. The segment covering 1559–1590 has biased composition (low complexity); that stretch reads SRTGGANTAAAAASPTVGGSTSTQSNPSTSTP. 3 disordered regions span residues 1559–1596, 2181–2203, and 2283–2307; these read SRTGGANTAAAAASPTVGGSTSTQSNPSTSTPHKVQII, INNGDDQENSKCAETENSNITTN, and TNEWETCSRGSVNEEALTPSRQTDD. Residues 2283-2293 show a composition bias toward polar residues; that stretch reads TNEWETCSRGS. Positions 2338–2373 form a coiled coil; it reads KNDEVAELGEQKQSQLERHKELLKKNILRKRSLLER. Residues 2382 to 2432 are disordered; sequence DVKTKVQRHVRPLSNASPDEQSENERSGEPNLDFKRTEVQNPRHGAGRPKK. Phosphoserine is present on residues Ser2395, Ser2398, and Ser2403. The segment covering 2404–2419 has biased composition (basic and acidic residues); that stretch reads ENERSGEPNLDFKRTE. A PHD-type 2 zinc finger spans residues 2481–2546; that stretch reads EFICIDCKRA…EYVCPECQRK (66 aa). The Bromo domain maps to 2556-2660; that stretch reads KLTSNDVEEL…SYFVQKIKNF (105 aa).

The protein belongs to the BPTF family. As to quaternary structure, component of the NURF complex composed of Caf1-55, E(bx), Nurf-38 and Iswi. Interacts with Trl. Interacts with histone H3-K4Me3.

The protein localises to the nucleus. Histone-binding component of NURF (nucleosome remodeling factor), a complex which catalyzes ATP-dependent nucleosome sliding and facilitates transcription of chromatin. Specifically recognizes H3 tails trimethylated on 'Lys-4' (H3K4me3), which mark transcription start sites of virtually all active genes. Required for homeotic gene expression, proper larval blood cell development, normal male X chromosome morphology, ecdysteroid signaling and metamorphosis. The polypeptide is Nucleosome-remodeling factor subunit NURF301 (E(bx)) (Drosophila melanogaster (Fruit fly)).